Consider the following 475-residue polypeptide: Lipoprotein lipase (475 aa).

Residues 1–27 form the signal peptide; the sequence is MESKALLLVALGMWFQSLTATRGGVAA. The segment at 32 to 53 is interaction with GPIHBP1; the sequence is GDFIDIESKFALRTPEDTAEDT. Cys-54 and Cys-67 are oxidised to a cystine. Residue Asn-70 is glycosylated (N-linked (GlcNAc...) asparagine). Position 121 is a 3'-nitrotyrosine (Tyr-121). Ser-159 (nucleophile) is an active-site residue. Asp-183 functions as the Charge relay system in the catalytic mechanism. Position 191 is a 3'-nitrotyrosine (Tyr-191). Residues Ala-194, Arg-197, Ser-199, and Asp-202 each contribute to the Ca(2+) site. Cys-243 and Cys-266 form a disulfide bridge. The active-site Charge relay system is His-268. Cystine bridges form between Cys-291–Cys-310 and Cys-302–Cys-305. The 124-residue stretch at 341-464 folds into the PLAT domain; the sequence is FHYQVKIHFS…KGKASVVFVK (124 aa). Position 343 is a 3'-nitrotyrosine (Tyr-343). Asn-386 carries an N-linked (GlcNAc...) asparagine glycan. Residues 417-421 are important for interaction with lipoprotein particles; the sequence is WSDWW. The segment at 430 to 434 is important for heparin binding; sequence KIRVK. The segment at 443–467 is interaction with GPIHBP1; the sequence is IFCSREKVSHLQKGKASVVFVKCHD. Cys-445 and Cys-465 are joined by a disulfide.

It belongs to the AB hydrolase superfamily. Lipase family. In terms of assembly, homodimer. Interacts with GPIHBP1 with 1:1 stoichiometry. Interacts with APOC2; the interaction activates LPL activity in the presence of lipids. Interaction with heparan sulfate proteoglycans is required to protect LPL against loss of activity. Associates with lipoprotein particles in blood plasma. Interacts with LMF1 and SEL1L; interaction with SEL1L is required to prevent aggregation of newly synthesized LPL in the endoplasmic reticulum (ER), and for normal export of LPL from the ER to the extracellular space. Interacts with SORL1; SORL1 acts as a sorting receptor, promoting LPL localization to endosomes and later to lysosomes, leading to degradation of newly synthesized LPL. In terms of processing, tyrosine nitration after lipopolysaccharide (LPS) challenge down-regulates the lipase activity.

It is found in the cell membrane. The protein localises to the secreted. The protein resides in the extracellular space. It localises to the extracellular matrix. It carries out the reaction a triacylglycerol + H2O = a diacylglycerol + a fatty acid + H(+). The apolipoprotein APOC2 acts as a coactivator of LPL activity. Ca(2+) binding promotes protein stability and formation of the active homodimer. Interaction with GPIHBP1 protects LPL against inactivation by ANGPTL4. Functionally, key enzyme in triglyceride metabolism. Catalyzes the hydrolysis of triglycerides from circulating chylomicrons and very low density lipoproteins (VLDL), and thereby plays an important role in lipid clearance from the blood stream, lipid utilization and storage. Mediates margination of triglyceride-rich lipoprotein particles in capillaries. Recruited to its site of action on the luminal surface of vascular endothelium by binding to GPIHBP1 and cell surface heparan sulfate proteoglycans. The chain is Lipoprotein lipase (LPL) from Neovison vison (American mink).